Consider the following 244-residue polypeptide: 2,5-diamino-6-ribosylamino-4(3H)-pyrimidinone 5'-phosphate reductase (244 aa).

NADP(+) contacts are provided by residues Thr-74, Asp-78, Ile-160, and Gly-183–Ile-187.

The protein belongs to the HTP reductase family. Homodimer.

It carries out the reaction 2,5-diamino-6-(1-D-ribitylamino)pyrimidin-4(3H)-one 5'-phosphate + NADP(+) = 2,5-diamino-6-(1-D-ribosylamino)pyrimidin-4(3H)-one 5'-phosphate + NADPH + H(+). It catalyses the reaction 2,5-diamino-6-(1-D-ribitylamino)pyrimidin-4(3H)-one 5'-phosphate + NAD(+) = 2,5-diamino-6-(1-D-ribosylamino)pyrimidin-4(3H)-one 5'-phosphate + NADH + H(+). It participates in cofactor biosynthesis; riboflavin biosynthesis. Catalyzes an early step in riboflavin biosynthesis, the NADPH-dependent reduction of the ribose side chain of 2,5-diamino-6-ribosylamino-4(3H)-pyrimidinone 5'-phosphate, yielding 2,5-diamino-6-ribitylamino-4(3H)-pyrimidinone 5'-phosphate. This Candida glabrata (strain ATCC 2001 / BCRC 20586 / JCM 3761 / NBRC 0622 / NRRL Y-65 / CBS 138) (Yeast) protein is 2,5-diamino-6-ribosylamino-4(3H)-pyrimidinone 5'-phosphate reductase (RIB7).